The following is a 124-amino-acid chain: Small ribosomal subunit protein uS12 (124 aa).

Residue aspartate 89 is modified to 3-methylthioaspartic acid. Lysine 108 carries the post-translational modification N6-acetyllysine.

Belongs to the universal ribosomal protein uS12 family. In terms of assembly, part of the 30S ribosomal subunit. Contacts proteins S8 and S17. May interact with IF1 in the 30S initiation complex.

Functionally, with S4 and S5 plays an important role in translational accuracy. Its function is as follows. Interacts with and stabilizes bases of the 16S rRNA that are involved in tRNA selection in the A site and with the mRNA backbone. Located at the interface of the 30S and 50S subunits, it traverses the body of the 30S subunit contacting proteins on the other side and probably holding the rRNA structure together. The combined cluster of proteins S8, S12 and S17 appears to hold together the shoulder and platform of the 30S subunit. The chain is Small ribosomal subunit protein uS12 from Escherichia coli O6:K15:H31 (strain 536 / UPEC).